The chain runs to 655 residues: Macrolide export ATP-binding/permease protein MacB (655 aa).

An ABC transporter domain is found at isoleucine 6–glutamine 244. Glycine 42–serine 49 contributes to the ATP binding site. Transmembrane regions (helical) follow at residues phenylalanine 279–glycine 299, leucine 528–methionine 548, phenylalanine 579–tyrosine 599, and alanine 618–leucine 638.

This sequence belongs to the ABC transporter superfamily. Macrolide exporter (TC 3.A.1.122) family. As to quaternary structure, homodimer.

The protein resides in the cell inner membrane. Non-canonical ABC transporter that contains transmembrane domains (TMD), which form a pore in the inner membrane, and an ATP-binding domain (NBD), which is responsible for energy generation. Confers resistance against macrolides. The polypeptide is Macrolide export ATP-binding/permease protein MacB (Rhodopseudomonas palustris (strain BisB18)).